A 757-amino-acid chain; its full sequence is Dynamin-related protein DNM1 (757 aa).

A Dynamin-type G domain is found at 25-333 (TLDLPILAVV…LLSHIRDKLP (309 aa)). The G1 motif stretch occupies residues 35 to 42 (GSQSSGKS). 35 to 42 (GSQSSGKS) contacts GTP. Residues 61–63 (VTR) form a G2 motif region. Residues 175 to 178 (DLPG) are G3 motif. GTP-binding positions include 175–179 (DLPGI) and 244–247 (TKLD). Positions 244 to 247 (TKLD) are G4 motif. The segment at 274 to 277 (VNRS) is G5 motif. A disordered region spans residues 557–597 (SKLSQQENGQTNGINGTSSISSNIDQDSAKNSDYDDDGIDA). The segment covering 567 to 580 (TNGINGTSSISSNI) has biased composition (low complexity). The residue at position 629 (S629) is a Phosphoserine. Residues 670 to 757 (CELIKRLIVS…KAATLISNIL (88 aa)) enclose the GED domain.

The protein belongs to the TRAFAC class dynamin-like GTPase superfamily. Dynamin/Fzo/YdjA family. In terms of assembly, interacts with FIS1 and MDV1.

Its subcellular location is the mitochondrion outer membrane. The enzyme catalyses GTP + H2O = GDP + phosphate + H(+). Functionally, microtubule-associated force-producing protein that participates mitochondrial fission. Fission of mitochondria occurs in many cell types and constitutes an important step in mitochondria morphology, which is balanced between fusion and fission. Functions antagonistically with FZO1. This Saccharomyces cerevisiae (strain ATCC 204508 / S288c) (Baker's yeast) protein is Dynamin-related protein DNM1 (DNM1).